A 188-amino-acid chain; its full sequence is Putative ankyrin repeat protein FPV230 (188 aa).

4 ANK repeats span residues 2–31, 36–65, 135–164, and 168–187; these read ENEL…NPNA, KYMI…DANV, LGST…DINI, and NNNT…YLKC.

This is Putative ankyrin repeat protein FPV230 from Vertebrata (FPV).